The primary structure comprises 147 residues: uncharacterized protein (147 aa).

The tract at residues 23–48 (EEVSQPEPNTANDSSTEYKGKSKDDF) is disordered. A compositionally biased stretch (polar residues) spans 28 to 37 (PEPNTANDSS). Residues 38–48 (TEYKGKSKDDF) are compositionally biased toward basic and acidic residues. Residues 85–105 (LMFCIIACSFICAIQFLFFII) form a helical membrane-spanning segment.

It is found in the membrane. This is an uncharacterized protein from Saccharomyces cerevisiae (strain ATCC 204508 / S288c) (Baker's yeast).